A 272-amino-acid chain; its full sequence is CDAN1-interacting nuclease 1 (272 aa).

The protein resides in the nucleus. The protein localises to the cytoplasm. In terms of biological role, may play a role in erythroid cell differentiation. This chain is CDAN1-interacting nuclease 1 (CDIN1), found in Gallus gallus (Chicken).